The following is an 87-amino-acid chain: UPF0213 protein SSA_0709 (87 aa).

Residues 3-78 (NKAYMYVLEC…KKKTRQAKLA (76 aa)) form the GIY-YIG domain.

The protein belongs to the UPF0213 family.

The chain is UPF0213 protein SSA_0709 from Streptococcus sanguinis (strain SK36).